We begin with the raw amino-acid sequence, 164 residues long: Ecotin (164 aa).

The first 20 residues, 1 to 20 (MKMFVPAVVFAALASASAWA), serve as a signal peptide directing secretion. A disulfide bridge connects residues cysteine 72 and cysteine 109.

This sequence belongs to the protease inhibitor I11 (ecotin) family. In terms of assembly, homodimer.

The protein resides in the periplasm. General inhibitor of pancreatic serine proteases: inhibits chymotrypsin, trypsin, elastases, factor X, kallikrein as well as a variety of other proteases. The chain is Ecotin from Salmonella typhi.